We begin with the raw amino-acid sequence, 115 residues long: DNA-binding protein PH1060 (115 aa).

It belongs to the PDCD5 family.

The protein is DNA-binding protein PH1060 of Pyrococcus horikoshii (strain ATCC 700860 / DSM 12428 / JCM 9974 / NBRC 100139 / OT-3).